Consider the following 171-residue polypeptide: MNNNRKIFEEVQNFVQNYDLNKDGSVTSYDIYLSFLKKMNGDVYKASQATGVLCSTIDMDHDGKFTYCEIAKYCVDKAKKQIEQNAEIAALADVEAMLLRFDKDKDKKLSQTEFLEYFKGRGYTPYSDRDQYLKIIDLDKDGCVSVNELQEWFKKRRIDYATMLSARGPNC.

4 consecutive EF-hand domains span residues 6-41 (KIFE…KMNG), 57-80 (IDMD…KAKK), 89-124 (AALA…RGYT), and 130-159 (DQYL…RRID). 5 residues coordinate Ca(2+): Asp19, Asn21, Asp23, Ser25, and Asp30. Ca(2+) contacts are provided by Asp102, Asp104, Asp106, Lys108, Glu113, Asp137, Asp139, Asp141, Cys143, and Glu148.

The sequence is that of Calcium-binding protein F-like (cbp12) from Dictyostelium discoideum (Social amoeba).